Consider the following 391-residue polypeptide: Phosphoglycerate kinase (391 aa).

Residues 21-23 (DLN), Arg36, 59-62 (HLGR), Arg113, and Arg146 each bind substrate. Residues Lys197, Glu319, and 345 to 348 (GGDT) contribute to the ATP site.

Belongs to the phosphoglycerate kinase family. In terms of assembly, monomer.

The protein localises to the cytoplasm. It carries out the reaction (2R)-3-phosphoglycerate + ATP = (2R)-3-phospho-glyceroyl phosphate + ADP. It participates in carbohydrate degradation; glycolysis; pyruvate from D-glyceraldehyde 3-phosphate: step 2/5. This Shewanella piezotolerans (strain WP3 / JCM 13877) protein is Phosphoglycerate kinase.